Reading from the N-terminus, the 218-residue chain is Protein GrpE (218 aa).

The span at 1–21 shows a compositional bias: basic and acidic residues; the sequence is MSDKQREAERQQSEDKAHSEA. Residues 1–66 form a disordered region; sequence MSDKQREAER…LEEARARAEE (66 aa). The segment covering 24–36 has biased composition (low complexity); the sequence is AEAGQAPEAQAAE.

It belongs to the GrpE family. Homodimer.

It localises to the cytoplasm. In terms of biological role, participates actively in the response to hyperosmotic and heat shock by preventing the aggregation of stress-denatured proteins, in association with DnaK and GrpE. It is the nucleotide exchange factor for DnaK and may function as a thermosensor. Unfolded proteins bind initially to DnaJ; upon interaction with the DnaJ-bound protein, DnaK hydrolyzes its bound ATP, resulting in the formation of a stable complex. GrpE releases ADP from DnaK; ATP binding to DnaK triggers the release of the substrate protein, thus completing the reaction cycle. Several rounds of ATP-dependent interactions between DnaJ, DnaK and GrpE are required for fully efficient folding. The polypeptide is Protein GrpE (Alkalilimnicola ehrlichii (strain ATCC BAA-1101 / DSM 17681 / MLHE-1)).